The sequence spans 579 residues: Insulin-like growth factor 2 mRNA-binding protein 3 (579 aa).

2 consecutive RRM domains span residues 2–75 (NKLY…HSVP) and 81–156 (RKLQ…YIPD). The segment at 160–192 (AQQNPLQQPRGRRGLGQRGSSRQGSPGSVSKQK) is disordered. The span at 177–187 (RGSSRQGSPGS) shows a compositional bias: low complexity. Ser-184 carries the phosphoserine modification. KH domains follow at residues 195-260 (DLPL…CKSI), 276-343 (EIPL…EEEI), and 405-470 (TETV…QGRI). Residues Lys-450 and Lys-475 each participate in a glycyl lysine isopeptide (Lys-Gly) (interchain with G-Cter in SUMO2) cross-link. The region spanning 487–553 (KLEAHIRVPS…YACQVAQRKI (67 aa)) is the KH 4 domain. Thr-528 is modified (phosphothreonine).

The protein belongs to the RRM IMP/VICKZ family. As to quaternary structure, can form homooligomers and heterooligomers with IGF2BP1 and IGF2BP3 in an RNA-dependent manner. Interacts with IGF2BP1. Interacts with ELAVL1, DHX9, HNRNPU, MATR3 and PABPC1. In terms of tissue distribution, expressed in fetal liver, fetal lung, fetal kidney, fetal thymus, fetal placenta, fetal follicles of ovary and gonocytes of testis, growing oocytes, spermatogonia and semen (at protein level). Expressed in cervix adenocarcinoma, in testicular, pancreatic and renal-cell carcinomas (at protein level). Expressed ubiquitously during fetal development at 8 and 14 weeks of gestation. Expressed in ovary, testis, brain, placenta, pancreatic cancer tissues and pancreatic cancer cell lines.

It localises to the nucleus. The protein localises to the cytoplasm. The protein resides in the P-body. Its subcellular location is the stress granule. RNA-binding factor that may recruit target transcripts to cytoplasmic protein-RNA complexes (mRNPs). This transcript 'caging' into mRNPs allows mRNA transport and transient storage. It also modulates the rate and location at which target transcripts encounter the translational apparatus and shields them from endonuclease attacks or microRNA-mediated degradation. Preferentially binds to N6-methyladenosine (m6A)-containing mRNAs and increases their stability. Binds to the 3'-UTR of CD44 mRNA and stabilizes it, hence promotes cell adhesion and invadopodia formation in cancer cells. Binds to beta-actin/ACTB and MYC transcripts. Increases MYC mRNA stability by binding to the coding region instability determinant (CRD) and binding is enhanced by m6A-modification of the CRD. Binds to the 5'-UTR of the insulin-like growth factor 2 (IGF2) mRNAs. In Homo sapiens (Human), this protein is Insulin-like growth factor 2 mRNA-binding protein 3 (IGF2BP3).